A 357-amino-acid chain; its full sequence is Maleylacetate reductase 1 (357 aa).

The protein belongs to the iron-containing alcohol dehydrogenase family.

It catalyses the reaction 3-oxoadipate + NAD(+) = maleylacetate + NADH + H(+). It carries out the reaction 3-oxoadipate + NADP(+) = maleylacetate + NADPH + H(+). It participates in aromatic compound metabolism; 3-chlorocatechol degradation. Functionally, plays a major role in the degradation of chloroaromatic compounds by channeling maleylacetate and some of its substituted derivatives into the 3-oxoadipate pathway. This enzyme converts maleylacetate and 2-chloromaleylacetate with similar efficiencies. In Rhodococcus opacus (Nocardia opaca), this protein is Maleylacetate reductase 1 (macA).